The chain runs to 429 residues: UDP-N-acetylglucosamine 1-carboxyvinyltransferase (429 aa).

22 to 23 contacts phosphoenolpyruvate; the sequence is KN. Arg96 is a UDP-N-acetyl-alpha-D-glucosamine binding site. Cys120 serves as the catalytic Proton donor. Cys120 is modified (2-(S-cysteinyl)pyruvic acid O-phosphothioketal). UDP-N-acetyl-alpha-D-glucosamine contacts are provided by residues 125–129, Asp310, and Ile332; that span reads RPVDL.

This sequence belongs to the EPSP synthase family. MurA subfamily.

It localises to the cytoplasm. The enzyme catalyses phosphoenolpyruvate + UDP-N-acetyl-alpha-D-glucosamine = UDP-N-acetyl-3-O-(1-carboxyvinyl)-alpha-D-glucosamine + phosphate. It participates in cell wall biogenesis; peptidoglycan biosynthesis. Its function is as follows. Cell wall formation. Adds enolpyruvyl to UDP-N-acetylglucosamine. This chain is UDP-N-acetylglucosamine 1-carboxyvinyltransferase, found in Caulobacter vibrioides (strain ATCC 19089 / CIP 103742 / CB 15) (Caulobacter crescentus).